The chain runs to 248 residues: uncharacterized protein (248 aa).

Residues M1–A26 form the signal peptide.

This is an uncharacterized protein from Acanthamoeba polyphaga mimivirus (APMV).